A 553-amino-acid chain; its full sequence is Mucolipin-3 (553 aa).

The Cytoplasmic segment spans residues 1-62 (MADPEVVVSS…FWARGRKPWK (62 aa)). The segment at 52–62 (KFWARGRKPWK) is interaction with phosphoinositides. The helical transmembrane segment at 63–83 (LAIQILKIAMVTIQLVLFGLS) threads the bilayer. Residues 84-283 (NQMVVAFKEE…VSGSIQKNTH (200 aa)) are Extracellular-facing. Residues 104 to 118 (KGYMDRMDDTYAVYT) form an extracellular/lumenal pore loop region. N-linked (GlcNAc...) asparagine glycosylation is found at asparagine 138, asparagine 172, and asparagine 205. A disulfide bridge links cysteine 159 with cysteine 185. An intrachain disulfide couples cysteine 238 to cysteine 269. A helical membrane pass occupies residues 284–304 (YMMIFDAFVILTCLVSLILCI). Topologically, residues 305–341 (RSVIRGLQLQQEFVNFFLLHYKKEVSVSDQMEFVNGW) are cytoplasmic. Residues 342 to 362 (YIMIIISDILTIIGSILKMEI) traverse the membrane as a helical segment. Topologically, residues 363-371 (QAKSLTSYD) are extracellular. A helical membrane pass occupies residues 372 to 392 (VCSILLGTSTMLVWLGVIRYL). The Cytoplasmic segment spans residues 393 to 414 (GFFAKYNLLILTLQAALPNVIR). A helical membrane pass occupies residues 415 to 435 (FCCCAAMIYLGYCFCGWIVLG). Residues 436–443 (PYHDKFRS) lie on the Extracellular side of the membrane. The pore-forming intramembrane region spans 444-464 (LNMVSECLFSLINGDDMFATF). Positions 456-459 (NGDD) match the Selectivity filter motif. The Extracellular portion of the chain corresponds to 465-475 (AKMQQKSYLVW). The chain crosses the membrane as a helical span at residues 476 to 497 (LFSRIYLYSFISLFIYMILSLF). Residues 498–553 (IALITDTYETIKQYQQDGFPETELRTFISECKDLPNSGKYRLEDDPPVSLFCCCKK) lie on the Cytoplasmic side of the membrane.

The protein belongs to the transient receptor (TC 1.A.4) family. Polycystin subfamily. MCOLN3 sub-subfamily. As to quaternary structure, homotetramer. Can heterooligomerize with MCOLN1; heteromeric assemblies have different channel properties as compared to the respective homooligomers and may be tissue-specific. May heterooligomerize with TRPV5 to form a functional distinct ion channel. Interacts with GABARAPL2. Post-translationally, N-glycosylated.

The protein localises to the cell membrane. Its subcellular location is the early endosome membrane. It is found in the late endosome membrane. The protein resides in the lysosome membrane. It localises to the cytoplasmic vesicle. The protein localises to the autophagosome membrane. It catalyses the reaction Ca(2+)(in) = Ca(2+)(out). It carries out the reaction K(+)(in) = K(+)(out). The catalysed reaction is Na(+)(in) = Na(+)(out). With respect to regulation, channel activity is activated by PtdIns(3,5)P2 (phosphatidylinositol 3,5-bisphosphate). Inhibited by lumenal H(+) and Na(+). The channel pore shows dynamic behavior and undergoes spontaneous, Ca(2+)-dependent modulation when conducting Ca(2+). Functionally, nonselective cation channel probably playing a role in the regulation of membrane trafficking events. Acts as a Ca(2+)-permeable cation channel with inwardly rectifying activity. Mediates release of Ca(2+) from endosomes to the cytoplasm, contributes to endosomal acidification and is involved in the regulation of membrane trafficking and fusion in the endosomal pathway. Also permeable to Mg(2+), Na(+) and K(+). Does not seem to act as mechanosensory transduction channel in inner ear sensory hair cells. Proposed to play a critical role at the cochlear stereocilia ankle-link region during hair-bundle growth. Involved in the regulation of autophagy. Through association with GABARAPL2 may be involved in autophagosome formation possibly providing Ca(2+) for the fusion process. Through a possible and probably tissue-specific heteromerization with MCOLN1 may be at least in part involved in many lysosome-dependent cellular events. Possible heteromeric ion channel assemblies with TRPV5 show pharmacological similarity with TRPML3. This chain is Mucolipin-3 (MCOLN3), found in Homo sapiens (Human).